The chain runs to 227 residues: MATWSNLSIQDGASPLMEQLSFFHDDHTMVVLLITVIVGYALSYMLFNAYTNRNMLHGHLIETIWTALPAITLIFIALPSLRLLYLLDDSVDAMITIKTIGRQWYWSYEYSDFMDVEFDTYMTPEQDLENDGFRLLDVDNRTILPMNTEVRVLTSASDVLHSWAVPALGVKIDATPGRLNQGTFTMNRPGLFFGQCSEICGANHSFMPIVIESTSVNLFIKWLSKMI.

The Mitochondrial intermembrane segment spans residues 1–26 (MATWSNLSIQDGASPLMEQLSFFHDD). Residues 27 to 48 (HTMVVLLITVIVGYALSYMLFN) traverse the membrane as a helical segment. Over 49–62 (AYTNRNMLHGHLIE) the chain is Mitochondrial matrix. Residues 63 to 82 (TIWTALPAITLIFIALPSLR) form a helical membrane-spanning segment. Over 83–227 (LLYLLDDSVD…LFIKWLSKMI (145 aa)) the chain is Mitochondrial intermembrane. 6 residues coordinate Cu cation: His-161, Cys-196, Glu-198, Cys-200, His-204, and Met-207. Glu-198 is a Mg(2+) binding site.

It belongs to the cytochrome c oxidase subunit 2 family. As to quaternary structure, component of the cytochrome c oxidase (complex IV, CIV), a multisubunit enzyme composed of a catalytic core of 3 subunits and several supernumerary subunits. The complex exists as a monomer or a dimer and forms supercomplexes (SCs) in the inner mitochondrial membrane with ubiquinol-cytochrome c oxidoreductase (cytochrome b-c1 complex, complex III, CIII). The cofactor is Cu cation.

The protein resides in the mitochondrion inner membrane. It catalyses the reaction 4 Fe(II)-[cytochrome c] + O2 + 8 H(+)(in) = 4 Fe(III)-[cytochrome c] + 2 H2O + 4 H(+)(out). Functionally, component of the cytochrome c oxidase, the last enzyme in the mitochondrial electron transport chain which drives oxidative phosphorylation. The respiratory chain contains 3 multisubunit complexes succinate dehydrogenase (complex II, CII), ubiquinol-cytochrome c oxidoreductase (cytochrome b-c1 complex, complex III, CIII) and cytochrome c oxidase (complex IV, CIV), that cooperate to transfer electrons derived from NADH and succinate to molecular oxygen, creating an electrochemical gradient over the inner membrane that drives transmembrane transport and the ATP synthase. Cytochrome c oxidase is the component of the respiratory chain that catalyzes the reduction of oxygen to water. Electrons originating from reduced cytochrome c in the intermembrane space (IMS) are transferred via the dinuclear copper A center (CU(A)) of subunit 2 and heme A of subunit 1 to the active site in subunit 1, a binuclear center (BNC) formed by heme A3 and copper B (CU(B)). The BNC reduces molecular oxygen to 2 water molecules using 4 electrons from cytochrome c in the IMS and 4 protons from the mitochondrial matrix. In Schistocerca gregaria (Desert locust), this protein is Cytochrome c oxidase subunit 2 (COII).